Reading from the N-terminus, the 283-residue chain is Pantothenate synthetase (283 aa).

30–37 is a binding site for ATP; that stretch reads MGALHEGH. His-37 (proton donor) is an active-site residue. (R)-pantoate is bound at residue Gln-61. Position 61 (Gln-61) interacts with beta-alanine. 147–150 contacts ATP; the sequence is GEKD. (R)-pantoate is bound at residue Gln-153. Residues Val-176 and 184–187 each bind ATP; that span reads VSSR.

This sequence belongs to the pantothenate synthetase family. As to quaternary structure, homodimer.

It localises to the cytoplasm. It carries out the reaction (R)-pantoate + beta-alanine + ATP = (R)-pantothenate + AMP + diphosphate + H(+). It participates in cofactor biosynthesis; (R)-pantothenate biosynthesis; (R)-pantothenate from (R)-pantoate and beta-alanine: step 1/1. Functionally, catalyzes the condensation of pantoate with beta-alanine in an ATP-dependent reaction via a pantoyl-adenylate intermediate. In Chlorobium luteolum (strain DSM 273 / BCRC 81028 / 2530) (Pelodictyon luteolum), this protein is Pantothenate synthetase.